A 413-amino-acid polypeptide reads, in one-letter code: Multifunctional CCA protein (413 aa).

Positions 8 and 11 each coordinate ATP. CTP contacts are provided by Gly-8 and Arg-11. Positions 21 and 23 each coordinate Mg(2+). Positions 91, 137, and 140 each coordinate ATP. Residues Arg-91, Arg-137, and Arg-140 each coordinate CTP. The HD domain maps to 228–329 (TGIHTLMVLE…VKIFDKADLW (102 aa)).

Belongs to the tRNA nucleotidyltransferase/poly(A) polymerase family. Bacterial CCA-adding enzyme type 1 subfamily. In terms of assembly, monomer. Can also form homodimers and oligomers. Requires Mg(2+) as cofactor. Ni(2+) serves as cofactor.

It carries out the reaction a tRNA precursor + 2 CTP + ATP = a tRNA with a 3' CCA end + 3 diphosphate. The catalysed reaction is a tRNA with a 3' CCA end + 2 CTP + ATP = a tRNA with a 3' CCACCA end + 3 diphosphate. In terms of biological role, catalyzes the addition and repair of the essential 3'-terminal CCA sequence in tRNAs without using a nucleic acid template. Adds these three nucleotides in the order of C, C, and A to the tRNA nucleotide-73, using CTP and ATP as substrates and producing inorganic pyrophosphate. tRNA 3'-terminal CCA addition is required both for tRNA processing and repair. Also involved in tRNA surveillance by mediating tandem CCA addition to generate a CCACCA at the 3' terminus of unstable tRNAs. While stable tRNAs receive only 3'-terminal CCA, unstable tRNAs are marked with CCACCA and rapidly degraded. In Shewanella sediminis (strain HAW-EB3), this protein is Multifunctional CCA protein.